A 328-amino-acid polypeptide reads, in one-letter code: Malate dehydrogenase (328 aa).

Residue 11 to 17 coordinates NAD(+); it reads GAAGQIG. Positions 94 and 100 each coordinate substrate. NAD(+) contacts are provided by residues asparagine 107, glutamine 114, and 131–133; that span reads VGN. Substrate contacts are provided by asparagine 133 and arginine 164. Catalysis depends on histidine 189, which acts as the Proton acceptor.

This sequence belongs to the LDH/MDH superfamily. MDH type 2 family.

It carries out the reaction (S)-malate + NAD(+) = oxaloacetate + NADH + H(+). Functionally, catalyzes the reversible oxidation of malate to oxaloacetate. This Stenotrophomonas maltophilia (strain R551-3) protein is Malate dehydrogenase.